The following is a 320-amino-acid chain: uncharacterized protein (320 aa).

The disordered stretch occupies residues valine 196–lysine 273. The span at tyrosine 200–asparagine 210 shows a compositional bias: acidic residues. Over residues serine 211 to proline 226 the composition is skewed to basic and acidic residues. A compositionally biased stretch (polar residues) spans glutamine 248 to lysine 273.

This is an uncharacterized protein from Acanthamoeba polyphaga mimivirus (APMV).